The following is an 819-amino-acid chain: Probable cadmium/zinc-transporting ATPase HMA1, chloroplastic (819 aa).

The N-terminal 17 residues, 1–17 (MEPATLTRSSSLTRFPY), are a transit peptide targeting the chloroplast. Residues 18–122 (RRGLSTLRLA…IGWVRLANYL (105 aa)) lie on the Stromal side of the membrane. Residues 66–79 (DHHHDHHHDDEQDH) show a composition bias toward basic and acidic residues. A disordered region spans residues 66–87 (DHHHDHHHDDEQDHHNHHHHHH). The chain crosses the membrane as a helical span at residues 123 to 144 (REHLHLCCSAAAMFLAAAVCPY). Topologically, residues 145 to 153 (LAPEPYIKS) are lumenal. Residues 154 to 173 (LQNAFMIVGFPLVGVSASLD) form a helical membrane-spanning segment. The Stromal segment spans residues 174–180 (ALMDIAG). A helical transmembrane segment spans residues 181-201 (GKVNIHVLMALAAFASVFMGN). A topological domain (lumenal) is located at residue alanine 202. The helical transmembrane segment at 203–223 (LEGGLLLAMFNLAHIAEEFFT) threads the bilayer. Residues 224–361 (SRSMVDVKEL…KPKLQRWLDE (138 aa)) are Stromal-facing. The chain crosses the membrane as a helical span at residues 362–384 (FGENYSKVVVVLSLAIAFLGPFL). Residues 385–398 (FKWPFLSTAACRGS) are Lumenal-facing. Residues 399–416 (VYRALGLMVAASPCALAV) traverse the membrane as a helical segment. The Stromal portion of the chain corresponds to 417–737 (APLAYATAIS…AKSRQTTSLV (321 aa)). Aspartate 453 functions as the 4-aspartylphosphate intermediate in the catalytic mechanism. The Mg(2+) site is built by glutamate 682 and aspartate 686. Residues 738-757 (KQNVALALTSIFLAALPSVL) traverse the membrane as a helical segment. Residues 758 to 762 (GFVPL) lie on the Lumenal side of the membrane. The chain crosses the membrane as a helical span at residues 763–781 (WLTVLLHEGGTLLVCLNSV). The Stromal portion of the chain corresponds to 782-819 (RGLNDPSWSWKQDIVHLINKLRSQEPTSSSSNSLSSAH).

This sequence belongs to the cation transport ATPase (P-type) (TC 3.A.3) family. Type IB subfamily.

Its subcellular location is the plastid. It localises to the chloroplast inner membrane. The catalysed reaction is Zn(2+)(in) + ATP + H2O = Zn(2+)(out) + ADP + phosphate + H(+). It carries out the reaction Cd(2+)(in) + ATP + H2O = Cd(2+)(out) + ADP + phosphate + H(+). Involved in cadmium/zinc transport. The polypeptide is Probable cadmium/zinc-transporting ATPase HMA1, chloroplastic (HMA1) (Arabidopsis thaliana (Mouse-ear cress)).